The sequence spans 430 residues: Purine nucleoside phosphorylase LACC1 (430 aa).

An N6-acetyllysine modification is found at Lys247. Residues His250, Cys284, and His301 each coordinate Zn(2+).

The protein belongs to the purine nucleoside phosphorylase YfiH/LACC1 family. As to quaternary structure, interacts with FASN. Interacts with SDHA. Interacts with ATF6, EIF2AK3 and ERN1. Phosphorylated on tyrosine residues. As to expression, predominantly expressed in myeloid cells. Highly expressed in primary macrophages and dendritic cells sorted from the peritoneum or spleen, respectively (at protein level).

Its subcellular location is the cytoplasm. It is found in the nucleus. The protein resides in the endoplasmic reticulum. The protein localises to the peroxisome. It carries out the reaction adenosine + phosphate = alpha-D-ribose 1-phosphate + adenine. The enzyme catalyses inosine + phosphate = alpha-D-ribose 1-phosphate + hypoxanthine. It catalyses the reaction guanosine + phosphate = alpha-D-ribose 1-phosphate + guanine. The catalysed reaction is S-methyl-5'-thioadenosine + phosphate = 5-(methylsulfanyl)-alpha-D-ribose 1-phosphate + adenine. It carries out the reaction adenosine + H2O + H(+) = inosine + NH4(+). In terms of biological role, purine nucleoside enzyme that catalyzes the phosphorolysis of adenosine, guanosine and inosine nucleosides, yielding D-ribose 1-phosphate and the respective free bases, adenine, guanine and hypoxanthine. Also catalyzes the phosphorolysis of S-methyl-5'-thioadenosine into adenine and S-methyl-5-thio-alpha-D-ribose 1-phosphate. Also has adenosine deaminase activity. Acts as a regulator of innate immunity in macrophages by modulating the purine nucleotide metabolism, thereby regulating the metabolic function and bioenergetic state of macrophages. Enables a purine nucleotide cycle between adenosine and inosine monophosphate and adenylosuccinate that prevents cytoplasmic acidification and balances the cytoplasmic-mitochondrial redox interface. The purine nucleotide cycle consumes aspartate and releases fumarate in a manner involving fatty acid oxidation and ATP-citrate lyase activity. Participates in pattern recognition receptor-induced cytokines in macrophages: associates with the NOD2-signaling complex and promotes optimal NOD2-induced signaling, cytokine secretion and bacterial clearance. Localizes to the endoplasmic reticulum upon PRR stimulation of macrophages and associates with endoplasmic reticulum-stress sensors, promoting the endoplasmic reticulum unfolded protein response (UPR). Does not show laccase activity. This Mus musculus (Mouse) protein is Purine nucleoside phosphorylase LACC1.